The sequence spans 565 residues: Dihydroxy-acid dehydratase (565 aa).

Mg(2+) is bound at residue aspartate 83. Residue cysteine 124 coordinates [2Fe-2S] cluster. The Mg(2+) site is built by aspartate 125 and lysine 126. N6-carboxylysine is present on lysine 126. Cysteine 197 lines the [2Fe-2S] cluster pocket. A Mg(2+)-binding site is contributed by glutamate 451. The Proton acceptor role is filled by serine 477.

Belongs to the IlvD/Edd family. Homodimer. Requires [2Fe-2S] cluster as cofactor. It depends on Mg(2+) as a cofactor.

The enzyme catalyses (2R)-2,3-dihydroxy-3-methylbutanoate = 3-methyl-2-oxobutanoate + H2O. It carries out the reaction (2R,3R)-2,3-dihydroxy-3-methylpentanoate = (S)-3-methyl-2-oxopentanoate + H2O. The protein operates within amino-acid biosynthesis; L-isoleucine biosynthesis; L-isoleucine from 2-oxobutanoate: step 3/4. It functions in the pathway amino-acid biosynthesis; L-valine biosynthesis; L-valine from pyruvate: step 3/4. Its function is as follows. Functions in the biosynthesis of branched-chain amino acids. Catalyzes the dehydration of (2R,3R)-2,3-dihydroxy-3-methylpentanoate (2,3-dihydroxy-3-methylvalerate) into 2-oxo-3-methylpentanoate (2-oxo-3-methylvalerate) and of (2R)-2,3-dihydroxy-3-methylbutanoate (2,3-dihydroxyisovalerate) into 2-oxo-3-methylbutanoate (2-oxoisovalerate), the penultimate precursor to L-isoleucine and L-valine, respectively. The sequence is that of Dihydroxy-acid dehydratase from Symbiobacterium thermophilum (strain DSM 24528 / JCM 14929 / IAM 14863 / T).